We begin with the raw amino-acid sequence, 498 residues long: Osteoclast stimulatory transmembrane protein (498 aa).

Residues M1–Q51 are Cytoplasmic-facing. A helical transmembrane segment spans residues L52–S72. Residues L73–P81 lie on the Extracellular side of the membrane. The helical transmembrane segment at A82 to I102 threads the bilayer. Residues R103–L121 are Cytoplasmic-facing. Residues L122 to V142 traverse the membrane as a helical segment. The Extracellular portion of the chain corresponds to R143–R226. Residues V227–Y247 traverse the membrane as a helical segment. Over L248–G303 the chain is Cytoplasmic. Residues L304–L324 form a helical membrane-spanning segment. Over L325–A401 the chain is Extracellular. The helical transmembrane segment at L402–W422 threads the bilayer. The Cytoplasmic portion of the chain corresponds to R423 to E498. Residues Q449–E498 are disordered. The span at G476–P485 shows a compositional bias: polar residues.

As to expression, expressed in osteoclast (at protein level). Ubiquitous. Highly expressed in multi-nuclear osteoclast cells compared to mono-nuclear macrophages. Expressed in foreign body giant cells (FBGCs).

The protein resides in the membrane. Functionally, probable cell surface receptor that plays a role in cellular fusion and cell differentiation. Cooperates with DCSTAMP in modulating cell-cell fusion in both osteoclasts and foreign body giant cells (FBGCs). Involved in osteoclast bone resorption. Promotes osteoclast differentiation and may play a role in the multinucleated osteoclast maturation. The sequence is that of Osteoclast stimulatory transmembrane protein (Ocstamp) from Mus musculus (Mouse).